A 352-amino-acid chain; its full sequence is UDP-3-O-acylglucosamine N-acyltransferase (352 aa).

The active-site Proton acceptor is the His242.

Belongs to the transferase hexapeptide repeat family. LpxD subfamily. Homotrimer.

It catalyses the reaction a UDP-3-O-[(3R)-3-hydroxyacyl]-alpha-D-glucosamine + a (3R)-hydroxyacyl-[ACP] = a UDP-2-N,3-O-bis[(3R)-3-hydroxyacyl]-alpha-D-glucosamine + holo-[ACP] + H(+). The protein operates within bacterial outer membrane biogenesis; LPS lipid A biosynthesis. Catalyzes the N-acylation of UDP-3-O-acylglucosamine using 3-hydroxyacyl-ACP as the acyl donor. Is involved in the biosynthesis of lipid A, a phosphorylated glycolipid that anchors the lipopolysaccharide to the outer membrane of the cell. The chain is UDP-3-O-acylglucosamine N-acyltransferase from Alkalilimnicola ehrlichii (strain ATCC BAA-1101 / DSM 17681 / MLHE-1).